The following is a 251-amino-acid chain: NADH-quinone oxidoreductase subunit C (251 aa).

The segment at 1-34 (MSDANNTAGDANEVNPEKDLSAENLPGQRGQGGE) is disordered.

The protein belongs to the complex I 30 kDa subunit family. As to quaternary structure, NDH-1 is composed of 14 different subunits. Subunits NuoB, C, D, E, F, and G constitute the peripheral sector of the complex.

The protein localises to the cell membrane. It catalyses the reaction a quinone + NADH + 5 H(+)(in) = a quinol + NAD(+) + 4 H(+)(out). In terms of biological role, NDH-1 shuttles electrons from NADH, via FMN and iron-sulfur (Fe-S) centers, to quinones in the respiratory chain. The immediate electron acceptor for the enzyme in this species is believed to be a menaquinone. Couples the redox reaction to proton translocation (for every two electrons transferred, four hydrogen ions are translocated across the cytoplasmic membrane), and thus conserves the redox energy in a proton gradient. The sequence is that of NADH-quinone oxidoreductase subunit C from Streptomyces coelicolor (strain ATCC BAA-471 / A3(2) / M145).